Consider the following 94-residue polypeptide: Small ribosomal subunit protein uS19c (94 aa).

Belongs to the universal ribosomal protein uS19 family.

Its subcellular location is the plastid. The protein localises to the chloroplast. In terms of biological role, protein S19 forms a complex with S13 that binds strongly to the 16S ribosomal RNA. The sequence is that of Small ribosomal subunit protein uS19c from Cyanidioschyzon merolae (strain NIES-3377 / 10D) (Unicellular red alga).